A 520-amino-acid polypeptide reads, in one-letter code: General transcription factor 3C polypeptide 5 (520 aa).

N-acetylalanine is present on A2. Residues 466 to 520 (LFSNTGKADRGKEQLMFESGEEEEEEEEEEEEEEEDFKPSDGSENEMETEILDYV) are disordered. 2 stretches are compositionally biased toward acidic residues: residues 484–501 (SGEEEEEEEEEEEEEEED) and 508–520 (SENEMETEILDYV).

Belongs to the TFIIIC subunit 5 family. As to quaternary structure, part of the TFIIIC subcomplex TFIIIC2, consisting of six subunits, GTF3C1, GTF3C2, GTF3C3, GTF3C4, GTF3C5 and GTF3C6. Interacts with BRF1, GTF3C6 and TBP.

The protein resides in the nucleus. Involved in RNA polymerase III-mediated transcription. Integral, tightly associated component of the DNA-binding TFIIIC2 subcomplex that directly binds tRNA and virus-associated RNA promoters. The chain is General transcription factor 3C polypeptide 5 (Gtf3c5) from Mus musculus (Mouse).